The sequence spans 172 residues: NADH-quinone oxidoreductase subunit B 1 (172 aa).

4 residues coordinate [4Fe-4S] cluster: C42, C43, C107, and C137.

This sequence belongs to the complex I 20 kDa subunit family. As to quaternary structure, NDH-1 is composed of 14 different subunits. Subunits NuoB, C, D, E, F, and G constitute the peripheral sector of the complex. [4Fe-4S] cluster serves as cofactor.

Its subcellular location is the cell inner membrane. The enzyme catalyses a quinone + NADH + 5 H(+)(in) = a quinol + NAD(+) + 4 H(+)(out). NDH-1 shuttles electrons from NADH, via FMN and iron-sulfur (Fe-S) centers, to quinones in the respiratory chain. Couples the redox reaction to proton translocation (for every two electrons transferred, four hydrogen ions are translocated across the cytoplasmic membrane), and thus conserves the redox energy in a proton gradient. The sequence is that of NADH-quinone oxidoreductase subunit B 1 from Anaeromyxobacter sp. (strain Fw109-5).